The primary structure comprises 408 residues: Leucine aminopeptidase 1 (408 aa).

The N-terminal stretch at 1 to 16 is a signal peptide; it reads MKVSSAIALLLPVVAA. The propeptide occupies 17 to 89; sequence RFVDSAFEQD…SAQSATTGPA (73 aa). Residues Asn-95, Asn-108, and Asn-182 are each glycosylated (N-linked (GlcNAc...) asparagine). Zn(2+)-binding residues include His-190, Asp-209, Glu-248, and Asp-275. Cys-324 and Cys-328 form a disulfide bridge. His-357 is a Zn(2+) binding site.

Belongs to the peptidase M28 family. M28E subfamily. In terms of assembly, monomer. Zn(2+) is required as a cofactor.

The protein resides in the secreted. Its function is as follows. Extracellular aminopeptidase that allows assimilation of proteinaceous substrates. This chain is Leucine aminopeptidase 1 (LAP1), found in Grosmannia clavigera (strain kw1407 / UAMH 11150) (Blue stain fungus).